The chain runs to 154 residues: OCIA domain-containing protein 2 (154 aa).

The OCIA domain occupies Met1–Ala120. N6-acetyllysine is present on Lys41.

In terms of assembly, interacts (via OCIA domain) with OCIAD1/ASRIJ and STAT3. Abundant in kidney, liver and brain.

Its subcellular location is the endosome. The protein resides in the mitochondrion. It is found in the mitochondrion inner membrane. Functionally, has an essential role in the assembly of mitochondrial respiratory chain complex III. Is also required for STAT3 activation and plays a role in cell migration. The sequence is that of OCIA domain-containing protein 2 (Ociad2) from Mus musculus (Mouse).